A 101-amino-acid chain; its full sequence is SFYLYYASFFDIALFTVFIIDIIKFYILSGVIFYFFNIDCIMFFWRVFLFITMGFLFFIFTTWYFICFYMYICMFIWNLVIYFRYNLKYCLFFCMLFIIYI.

The next 3 membrane-spanning stretches (helical) occupy residues 12–32, 48–68, and 79–99; these read IALFTVFIIDIIKFYILSGVI, FLFITMGFLFFIFTTWYFICF, and LVIYFRYNLKYCLFFCMLFII.

It belongs to the complex I subunit 5 family.

The protein localises to the mitochondrion inner membrane. The catalysed reaction is a ubiquinone + NADH + 5 H(+)(in) = a ubiquinol + NAD(+) + 4 H(+)(out). Functionally, core subunit of the mitochondrial membrane respiratory chain NADH dehydrogenase (Complex I) that is believed to belong to the minimal assembly required for catalysis. Complex I functions in the transfer of electrons from NADH to the respiratory chain. The immediate electron acceptor for the enzyme is believed to be ubiquinone. The chain is NADH-ubiquinone oxidoreductase chain 5 (ND5) from Leishmania tarentolae (Sauroleishmania tarentolae).